Here is an 802-residue protein sequence, read N- to C-terminus: Copper-exporting P-type ATPase (802 aa).

2 HMA domains span residues 5 to 70 (KKTT…YGVA) and 72 to 138 (ETVE…YDAS). Cys-16, Cys-19, Cys-83, and Cys-86 together coordinate Cu(+). 6 helical membrane-spanning segments follow: residues 161 to 181 (LIIS…HLFN), 192 to 212 (WFQF…FYVG), 224 to 244 (MDVL…YEMV), 256 to 276 (LYFE…YLEA), 411 to 431 (YFVP…ITLV), and 438 to 458 (PALV…LGLA). The active-site 4-aspartylphosphate intermediate is Asp-495. Asp-690 and Asp-694 together coordinate Mg(2+). Transmembrane regions (helical) follow at residues 748–767 (LFWA…LGLL) and 771–790 (VAGA…ALRL).

The protein belongs to the cation transport ATPase (P-type) (TC 3.A.3) family. Type IB subfamily.

It is found in the cell membrane. It catalyses the reaction Cu(+)(in) + ATP + H2O = Cu(+)(out) + ADP + phosphate + H(+). Its function is as follows. Involved in copper export. The protein is Copper-exporting P-type ATPase (copA) of Staphylococcus aureus (strain COL).